Reading from the N-terminus, the 284-residue chain is D-tagatose-1,6-bisphosphate aldolase subunit GatY (284 aa).

The Proton donor role is filled by aspartate 82. Zn(2+) contacts are provided by histidine 83 and histidine 180. Glycine 181 contacts dihydroxyacetone phosphate. Residue histidine 208 participates in Zn(2+) binding. Residues 209–211 (GAS) and 230–233 (NVAT) contribute to the dihydroxyacetone phosphate site.

Belongs to the class II fructose-bisphosphate aldolase family. TagBP aldolase GatY subfamily. Forms a complex with GatZ. Zn(2+) serves as cofactor.

The catalysed reaction is D-tagatofuranose 1,6-bisphosphate = D-glyceraldehyde 3-phosphate + dihydroxyacetone phosphate. Its pathway is carbohydrate metabolism; D-tagatose 6-phosphate degradation; D-glyceraldehyde 3-phosphate and glycerone phosphate from D-tagatose 6-phosphate: step 2/2. In terms of biological role, catalytic subunit of the tagatose-1,6-bisphosphate aldolase GatYZ, which catalyzes the reversible aldol condensation of dihydroxyacetone phosphate (DHAP or glycerone-phosphate) with glyceraldehyde 3-phosphate (G3P) to produce tagatose 1,6-bisphosphate (TBP). Requires GatZ subunit for full activity and stability. Is involved in the catabolism of galactitol. In Escherichia coli O8 (strain IAI1), this protein is D-tagatose-1,6-bisphosphate aldolase subunit GatY.